The chain runs to 314 residues: 4-hydroxy-3-methylbut-2-enyl diphosphate reductase (314 aa).

A [4Fe-4S] cluster-binding site is contributed by C12. Residues H41 and H74 each coordinate (2E)-4-hydroxy-3-methylbut-2-enyl diphosphate. Residues H41 and H74 each contribute to the dimethylallyl diphosphate site. Positions 41 and 74 each coordinate isopentenyl diphosphate. Residue C96 coordinates [4Fe-4S] cluster. (2E)-4-hydroxy-3-methylbut-2-enyl diphosphate is bound at residue H124. A dimethylallyl diphosphate-binding site is contributed by H124. H124 lines the isopentenyl diphosphate pocket. The Proton donor role is filled by E126. T167 contacts (2E)-4-hydroxy-3-methylbut-2-enyl diphosphate. Residue C197 coordinates [4Fe-4S] cluster. Positions 225, 226, 227, and 269 each coordinate (2E)-4-hydroxy-3-methylbut-2-enyl diphosphate. Dimethylallyl diphosphate-binding residues include S225, S226, N227, and S269. Isopentenyl diphosphate is bound by residues S225, S226, N227, and S269.

It belongs to the IspH family. The cofactor is [4Fe-4S] cluster.

The enzyme catalyses isopentenyl diphosphate + 2 oxidized [2Fe-2S]-[ferredoxin] + H2O = (2E)-4-hydroxy-3-methylbut-2-enyl diphosphate + 2 reduced [2Fe-2S]-[ferredoxin] + 2 H(+). The catalysed reaction is dimethylallyl diphosphate + 2 oxidized [2Fe-2S]-[ferredoxin] + H2O = (2E)-4-hydroxy-3-methylbut-2-enyl diphosphate + 2 reduced [2Fe-2S]-[ferredoxin] + 2 H(+). It functions in the pathway isoprenoid biosynthesis; dimethylallyl diphosphate biosynthesis; dimethylallyl diphosphate from (2E)-4-hydroxy-3-methylbutenyl diphosphate: step 1/1. It participates in isoprenoid biosynthesis; isopentenyl diphosphate biosynthesis via DXP pathway; isopentenyl diphosphate from 1-deoxy-D-xylulose 5-phosphate: step 6/6. Catalyzes the conversion of 1-hydroxy-2-methyl-2-(E)-butenyl 4-diphosphate (HMBPP) into a mixture of isopentenyl diphosphate (IPP) and dimethylallyl diphosphate (DMAPP). Acts in the terminal step of the DOXP/MEP pathway for isoprenoid precursor biosynthesis. The polypeptide is 4-hydroxy-3-methylbut-2-enyl diphosphate reductase (Actinobacillus succinogenes (strain ATCC 55618 / DSM 22257 / CCUG 43843 / 130Z)).